The primary structure comprises 421 residues: MDKLIITGGARLDGEIRISGAKNSALPILAATLLCDGPVTVGNLPHLHDITTMIELFGRMGIEPVIDEKLSVEIDPRTIKTLIAPYELVKTMRASILVLGPMVARFGEAEVALPGGCAIGSRPVDLHIRGLEAMGAVIDVEGGYIKAKAPEGGLRGAHFFFDTVSVTGTENIMMAAALAKGRSVLQNAAREPEVVDLANFLNAMGAKVSGAGTDTITIDGVERLGSAFYKVMPDRIETGTYLVAAAVTGGRVKVKDTDPTILEAVLEKLREAGAEITCGEDWIELNMHGKRPKAVNVRTAPYPAFPTDMQAQFISLNAIAEGTGAVIETIFENRFMHVYELHRMGAHIQVEGNTAIVTGIETLKGAPVMATDLRASASLVISALVAQGDTLIDRIYHIDRGYECIEEKLQMLGAKIRRVPG.

Residue 22–23 (KN) coordinates phosphoenolpyruvate. UDP-N-acetyl-alpha-D-glucosamine is bound at residue R93. The active-site Proton donor is C117. At C117 the chain carries 2-(S-cysteinyl)pyruvic acid O-phosphothioketal. UDP-N-acetyl-alpha-D-glucosamine is bound by residues 122–126 (RPVDL), D308, and I330.

Belongs to the EPSP synthase family. MurA subfamily.

The protein localises to the cytoplasm. It catalyses the reaction phosphoenolpyruvate + UDP-N-acetyl-alpha-D-glucosamine = UDP-N-acetyl-3-O-(1-carboxyvinyl)-alpha-D-glucosamine + phosphate. It functions in the pathway cell wall biogenesis; peptidoglycan biosynthesis. Cell wall formation. Adds enolpyruvyl to UDP-N-acetylglucosamine. The polypeptide is UDP-N-acetylglucosamine 1-carboxyvinyltransferase (Pseudomonas fluorescens (strain Pf0-1)).